The primary structure comprises 313 residues: Porphobilinogen deaminase (313 aa).

Cysteine 241 bears the S-(dipyrrolylmethanemethyl)cysteine mark.

The protein belongs to the HMBS family. Monomer. Dipyrromethane serves as cofactor.

The enzyme catalyses 4 porphobilinogen + H2O = hydroxymethylbilane + 4 NH4(+). Its pathway is porphyrin-containing compound metabolism; protoporphyrin-IX biosynthesis; coproporphyrinogen-III from 5-aminolevulinate: step 2/4. It participates in porphyrin-containing compound metabolism; chlorophyll biosynthesis. Functionally, tetrapolymerization of the monopyrrole PBG into the hydroxymethylbilane pre-uroporphyrinogen in several discrete steps. This chain is Porphobilinogen deaminase, found in Chlorobium chlorochromatii (strain CaD3).